Here is a 227-residue protein sequence, read N- to C-terminus: Ribosomal RNA large subunit methyltransferase E (227 aa).

Residues Gly78, Trp80, Asp103, Asp119, and Asp143 each contribute to the S-adenosyl-L-methionine site. Lys183 functions as the Proton acceptor in the catalytic mechanism.

Belongs to the class I-like SAM-binding methyltransferase superfamily. RNA methyltransferase RlmE family.

The protein localises to the cytoplasm. It carries out the reaction uridine(2552) in 23S rRNA + S-adenosyl-L-methionine = 2'-O-methyluridine(2552) in 23S rRNA + S-adenosyl-L-homocysteine + H(+). In terms of biological role, specifically methylates the uridine in position 2552 of 23S rRNA at the 2'-O position of the ribose in the fully assembled 50S ribosomal subunit. This chain is Ribosomal RNA large subunit methyltransferase E, found in Rickettsia felis (strain ATCC VR-1525 / URRWXCal2) (Rickettsia azadi).